Here is a 241-residue protein sequence, read N- to C-terminus: Platelet-derived growth factor subunit B (241 aa).

The signal sequence occupies residues 1 to 20 (MNRCWALFLPLCCYLRLVSA). Residues 21–81 (EGDPIPEELY…ELESSSRGRR (61 aa)) constitute a propeptide, removed in mature form. N63 is a glycosylation site (N-linked (GlcNAc...) asparagine). Cystine bridges form between C97–C141, C130–C178, and C134–C180. Residues 191–241 (RSPGTSREQRAKTPQARVTIRTVRIRRPPKGKHRKFKHTHDKAALKETLGA) constitute a propeptide, removed in mature form. Residues 217–230 (RPPKGKHRKFKHTH) are compositionally biased toward basic residues. The interval 217–241 (RPPKGKHRKFKHTHDKAALKETLGA) is disordered.

The protein belongs to the PDGF/VEGF growth factor family. In terms of assembly, antiparallel homodimer; disulfide-linked. Antiparallel heterodimer with PDGFA; disulfide-linked. The PDGFB homodimer interacts with PDGFRA and PDGFRB homodimers, and with heterodimers formed by PDGFRA and PDGFRB. The heterodimer composed of PDGFA and PDGFB interacts with PDGFRB homodimers, and with heterodimers formed by PDGFRA and PDGFRB. Interacts with XLKD1. Interacts with LRP1. Interacts with SORL1 (via the N-terminal ectodomain). Interacts with CD82; this interaction inhibits PDGFB-mediated signaling pathway. In terms of tissue distribution, localized to vascular smooth muscle cells. Also weakly expressed by cortical interstitial cells but absent in tubules. Up-regulated in areas of renal fibrosis. In mice with unilateral ureteral obstruction, an increased expression in interstitial cells and in some tubules observed after day 4.

The protein resides in the secreted. Its function is as follows. Growth factor that plays an essential role in the regulation of embryonic development, cell proliferation, cell migration, survival and chemotaxis. Potent mitogen for cells of mesenchymal origin. Required for normal proliferation and recruitment of pericytes and vascular smooth muscle cells in the central nervous system, skin, lung, heart and placenta. Required for normal blood vessel development, and for normal development of kidney glomeruli. Plays an important role in wound healing. Signaling is modulated by the formation of heterodimers with PDGFA. This Mus musculus (Mouse) protein is Platelet-derived growth factor subunit B (Pdgfb).